The chain runs to 388 residues: Chorismate synthase (388 aa).

Residues Arg-39 and Arg-45 each contribute to the NADP(+) site. FMN-binding positions include Arg-132 to Ser-134, Asn-251 to Ala-252, Gly-296, Lys-311 to Thr-315, and Arg-337.

This sequence belongs to the chorismate synthase family. As to quaternary structure, homotetramer. It depends on FMNH2 as a cofactor.

It catalyses the reaction 5-O-(1-carboxyvinyl)-3-phosphoshikimate = chorismate + phosphate. The protein operates within metabolic intermediate biosynthesis; chorismate biosynthesis; chorismate from D-erythrose 4-phosphate and phosphoenolpyruvate: step 7/7. Catalyzes the anti-1,4-elimination of the C-3 phosphate and the C-6 proR hydrogen from 5-enolpyruvylshikimate-3-phosphate (EPSP) to yield chorismate, which is the branch point compound that serves as the starting substrate for the three terminal pathways of aromatic amino acid biosynthesis. This reaction introduces a second double bond into the aromatic ring system. This Staphylococcus aureus (strain bovine RF122 / ET3-1) protein is Chorismate synthase.